We begin with the raw amino-acid sequence, 247 residues long: Granulin (247 aa).

This sequence belongs to the polyhedrin family.

Its function is as follows. Component of the virus occlusion bodies, which are large proteinaceous structures, that protect the virus from the outside environment for extended periods until they are ingested by insect larvae. The sequence is that of Granulin from Pieris brassicae granulosis virus (PbGV).